Consider the following 397-residue polypeptide: 2-deoxy-scyllo-inosose synthase (397 aa).

NAD(+) contacts are provided by residues D41, 71–74, 103–107, 127–128, 138–140, and 149–150; these read EPYK, GVIGN, TS, SLK, and KN. The active site involves K140. A Co(2+)-binding site is contributed by E182. The active site involves E242. 2 residues coordinate Co(2+): H245 and H261.

This sequence belongs to the sugar phosphate cyclases superfamily. DOI synthase family. Requires NAD(+) as cofactor. It depends on Co(2+) as a cofactor.

It carries out the reaction D-glucose 6-phosphate = 2-deoxy-L-scyllo-inosose + phosphate. The protein operates within metabolic intermediate biosynthesis; 2-deoxystreptamine biosynthesis; 2-deoxystreptamine from D-glucose 6-phosphate: step 1/4. It functions in the pathway antibiotic biosynthesis; gentamicin biosynthesis. Catalyzes the intramolecular carbocycle formation from D-glucose-6-phosphate to 2-deoxy-scyllo-inosose (DOI). The polypeptide is 2-deoxy-scyllo-inosose synthase (gtmA) (Micromonospora echinospora (Micromonospora purpurea)).